A 167-amino-acid chain; its full sequence is Arginine repressor (167 aa).

This sequence belongs to the ArgR family.

It localises to the cytoplasm. It functions in the pathway amino-acid biosynthesis; L-arginine biosynthesis [regulation]. Functionally, regulates arginine biosynthesis genes. This Mycobacterium leprae (strain Br4923) protein is Arginine repressor.